A 575-amino-acid polypeptide reads, in one-letter code: Transcription factor coe2 (575 aa).

Residues arginine 63–asparagine 66 form an interaction with DNA region. The C5-type zinc-finger motif lies at cysteine 151–cysteine 170. Interaction with DNA stretches follow at residues asparagine 197 to asparagine 204 and asparagine 236 to lysine 239. Residues proline 254 to tyrosine 336 enclose the IPT/TIG domain. A disordered region spans residues isoleucine 450 to methionine 487. Low complexity predominate over residues serine 454–serine 476. Residues asparagine 477 to methionine 487 show a composition bias toward polar residues.

Belongs to the COE family.

The protein resides in the nucleus. In terms of biological role, may play a pivotal role in the transcriptional cascade that specifies primary neurons in embryos. Stabilizes the higher neural potential of selected progenitor cells that express neurog2/X-ngnr-1 by maintaining Delta-Notch signaling. Thus ensures the transition between neural competence and irreversible commitment to a neural fate. Also promotes neuronal differentiation by activating neurod1 expression, directly or indirectly. The protein is Transcription factor coe2 of Xenopus tropicalis (Western clawed frog).